The chain runs to 95 residues: Protein TusB (95 aa).

The protein belongs to the DsrH/TusB family. In terms of assembly, heterohexamer, formed by a dimer of trimers. The hexameric TusBCD complex contains 2 copies each of TusB, TusC and TusD. The TusBCD complex interacts with TusE.

The protein resides in the cytoplasm. Functionally, part of a sulfur-relay system required for 2-thiolation of 5-methylaminomethyl-2-thiouridine (mnm(5)s(2)U) at tRNA wobble positions. In Buchnera aphidicola subsp. Schizaphis graminum (strain Sg), this protein is Protein TusB.